Here is a 354-residue protein sequence, read N- to C-terminus: Homer protein homolog 1 (354 aa).

One can recognise a WH1 domain in the interval 1–110; it reads MGEQPIFSTR…EKFQEFKEAA (110 aa). Residue G2 is modified to N-acetylglycine. The tract at residues 114 to 173 is disordered; the sequence is KEKSQEKMELTSTPSQESAGGDLQSPLTPESINGTDDERTPDVTQNSEPRAEPTQNALPF. Polar residues-rich tracts occupy residues 138–147 and 155–173; these read SPLTPESING and DVTQ…ALPF. Residues 181–352 adopt a coiled-coil conformation; it reads KHWEAELATL…LRDNLAKLLE (172 aa). The segment at 290 to 354 is required for tetramerization; the sequence is KLQEVEIRNK…DNLAKLLECS (65 aa). S306 bears the Phosphoserine mark.

It belongs to the Homer family. As to quaternary structure, tetramer; this tetrameric structure is critical for forming the high-order complex with SHANK1, which in turn is necessary for the structural and functional integrity of dendritic spines. Interacts with GRM1, GRM5, ITPR1, DNM3, RYR1, RYR2 and SHANK3. Interacts with IFT57 and OPHN1. Isoform 1 encodes a coiled-coil structure that mediates homo- and heteromultimerization. Interacts with SHANK1; forms high-order polymerized complex with a mesh-like network structure, at least composed of SHANK1, HOMER1 and DLGAP1; the complex formation is SHANK1 multimerization dependent. Interacts with NFATC4. Interacts with DAGLA (via PPXXF motif); this interaction is required for the cell membrane localization of DAGLA. Interacts with SRGAP2.

Its subcellular location is the cytoplasm. The protein localises to the postsynaptic density. It localises to the synapse. It is found in the cell projection. The protein resides in the dendritic spine. In terms of biological role, postsynaptic density scaffolding protein. Binds and cross-links cytoplasmic regions of GRM1, GRM5, ITPR1, DNM3, RYR1, RYR2, SHANK1 and SHANK3. By physically linking GRM1 and GRM5 with ER-associated ITPR1 receptors, it aids the coupling of surface receptors to intracellular calcium release. May also couple GRM1 to PI3 kinase through its interaction with AGAP2. Isoform 1 regulates the trafficking and surface expression of GRM5. Isoform 3 acts as a natural dominant negative, in dynamic competition with constitutively expressed isoform 1 to regulate synaptic metabotropic glutamate function. Isoform 3, may be involved in the structural changes that occur at synapses during long-lasting neuronal plasticity and development. Forms a high-order complex with SHANK1, which in turn is necessary for the structural and functional integrity of dendritic spines. Negatively regulates T cell activation by inhibiting the calcineurin-NFAT pathway. Acts by competing with calcineurin/PPP3CA for NFAT protein binding, hence preventing NFAT activation by PPP3CA. In Homo sapiens (Human), this protein is Homer protein homolog 1.